Consider the following 405-residue polypeptide: Calsequestrin-1 (405 aa).

The signal sequence occupies residues 1 to 34 (MRATDRMGARAVSELRLALLFVLVLGTPRLGVQG). Y43 is subject to Phosphotyrosine. Residue S81 is modified to Phosphoserine. T124 bears the Phosphothreonine mark. A Phosphoserine modification is found at S216. The N-linked (GlcNAc...) asparagine glycan is linked to N350. The interval 382-405 (EGEINTEDDDDDDDDDDDDDDDDD) is disordered.

It belongs to the calsequestrin family. As to quaternary structure, monomer; increases in response to a depletion of intracellular calcium. Homodimer. Homotetramer and homopolymer. Can form linear homooligomers. Ca(2+) ions promote oligomerization. Interacts (via C-terminal end and preferentially with the monomeric form) with STIM1; this interaction increases in response to a depletion of intracellular calcium, decreases both STIM1 aggregation and clustering, interaction of STIM1 with ORAI1 and store-operated Ca(2+) entry (SOCE) activity. Interacts with ASPH and TRDN. N-glycosylated. In terms of tissue distribution, detected in skeletal muscle (at protein level). Detected in skeletal muscle.

Its subcellular location is the endoplasmic reticulum. It is found in the sarcoplasmic reticulum. The protein resides in the sarcoplasmic reticulum lumen. It localises to the sarcoplasmic reticulum membrane. The protein localises to the mitochondrion matrix. Calsequestrin is a high-capacity, moderate affinity, calcium-binding protein and thus acts as an internal calcium store in muscle. Calcium ions are bound by clusters of acidic residues at the protein surface, often at the interface between subunits. Can bind around 80 Ca(2+) ions. Regulates the release of lumenal Ca(2+) via the calcium release channel RYR1; this plays an important role in triggering muscle contraction. Negatively regulates store-operated Ca(2+) entry (SOCE) activity. This is Calsequestrin-1 (Casq1) from Mus musculus (Mouse).